A 446-amino-acid chain; its full sequence is MTYKPTVAAGRNVVVVGTQWGDEGKGKLVDWLTEMSQGVVRFQGGHNAGHTLVINGIKTALHLIPSGIMRPGVKCYIGNGVVLSAAKLFEEIEGLEKAGVEVRSRLRISEACPLILPFHAALDIAREAYREKGGTARIGTTGRGIGPAYEDKIARRALRVQDLKYPERFAAKLRELLDLHNFVLTGYLHAPAIDFDTVYAEAMRHAELLKPMMADVSRELNDANREGANLLFEGAQGTLLDVDHGTYPYVTSSNCVAGNAAAGAGVGPGMLHYILGITKAYCTRVGGGPFPTELDWETPDTVGYHLSTVGAEKGVTTGRSRRCGWFDAALLKRSAQVNGLSGLCITKLDVLDGIAELKLCTGYELDGHITDILPMGAEDIERCKPIYETLPGWSQSTVGVTQYDQLPAAAQKYLHRIEEVTGVPIDMISTSPDRDHTILLRNPYAA.

Residues 21–27 (GDEGKGK) and 49–51 (GHT) contribute to the GTP site. Aspartate 22 acts as the Proton acceptor in catalysis. Aspartate 22 and glycine 49 together coordinate Mg(2+). IMP-binding positions include 22-25 (DEGK), 47-50 (NAGH), threonine 141, arginine 155, glutamine 236, threonine 251, and arginine 319. Catalysis depends on histidine 50, which acts as the Proton donor. Substrate is bound at residue 315–321 (VTTGRSR). GTP contacts are provided by residues arginine 321, 347–349 (KLD), and 429–431 (STS).

It belongs to the adenylosuccinate synthetase family. In terms of assembly, homodimer. Mg(2+) is required as a cofactor.

It localises to the cytoplasm. The enzyme catalyses IMP + L-aspartate + GTP = N(6)-(1,2-dicarboxyethyl)-AMP + GDP + phosphate + 2 H(+). The protein operates within purine metabolism; AMP biosynthesis via de novo pathway; AMP from IMP: step 1/2. In terms of biological role, plays an important role in the de novo pathway of purine nucleotide biosynthesis. Catalyzes the first committed step in the biosynthesis of AMP from IMP. This is Adenylosuccinate synthetase from Polaromonas sp. (strain JS666 / ATCC BAA-500).